Consider the following 69-residue polypeptide: Large ribosomal subunit protein uL29 (69 aa).

Belongs to the universal ribosomal protein uL29 family.

This Methylobacillus flagellatus (strain ATCC 51484 / DSM 6875 / VKM B-1610 / KT) protein is Large ribosomal subunit protein uL29.